Consider the following 183-residue polypeptide: Glutathione-regulated potassium-efflux system ancillary protein KefG (183 aa).

The protein belongs to the NAD(P)H dehydrogenase (quinone) family. KefG subfamily. In terms of assembly, interacts with KefB.

The protein resides in the cell inner membrane. The enzyme catalyses a quinone + NADH + H(+) = a quinol + NAD(+). The catalysed reaction is a quinone + NADPH + H(+) = a quinol + NADP(+). In terms of biological role, regulatory subunit of a potassium efflux system that confers protection against electrophiles. Required for full activity of KefB. This Serratia proteamaculans (strain 568) protein is Glutathione-regulated potassium-efflux system ancillary protein KefG.